We begin with the raw amino-acid sequence, 303 residues long: GMP synthase [glutamine-hydrolyzing] subunit B (303 aa).

The GMPS ATP-PPase domain occupies 1-183 (MDVEKFVENA…LGLPKEISER (183 aa)). 28 to 34 (SGGVDSS) lines the ATP pocket.

Heterodimer composed of a glutamine amidotransferase subunit (A) and a GMP-binding subunit (B).

It catalyses the reaction XMP + L-glutamine + ATP + H2O = GMP + L-glutamate + AMP + diphosphate + 2 H(+). It participates in purine metabolism; GMP biosynthesis; GMP from XMP (L-Gln route): step 1/1. Functionally, catalyzes the synthesis of GMP from XMP. In Archaeoglobus fulgidus (strain ATCC 49558 / DSM 4304 / JCM 9628 / NBRC 100126 / VC-16), this protein is GMP synthase [glutamine-hydrolyzing] subunit B (guaAB).